Reading from the N-terminus, the 343-residue chain is Sulfate/thiosulfate import ATP-binding protein CysA (343 aa).

The ABC transporter domain maps to I3 to V237. G35–T42 contributes to the ATP binding site.

It belongs to the ABC transporter superfamily. Sulfate/tungstate importer (TC 3.A.1.6) family. As to quaternary structure, the complex is composed of two ATP-binding proteins (CysA), two transmembrane proteins (CysT and CysW) and a solute-binding protein (CysP).

It localises to the cell inner membrane. It carries out the reaction sulfate(out) + ATP + H2O = sulfate(in) + ADP + phosphate + H(+). The catalysed reaction is thiosulfate(out) + ATP + H2O = thiosulfate(in) + ADP + phosphate + H(+). In terms of biological role, part of the ABC transporter complex CysAWTP involved in sulfate/thiosulfate import. Responsible for energy coupling to the transport system. The sequence is that of Sulfate/thiosulfate import ATP-binding protein CysA from Xanthomonas campestris pv. campestris (strain ATCC 33913 / DSM 3586 / NCPPB 528 / LMG 568 / P 25).